A 620-amino-acid chain; its full sequence is MLSAIYTVLAGLLFLPLLVNLCCPYFFQDIGYFLKVAAVGRRVRSYGKRRPARTILRAFLEKARQTPHKPFLLFRDETLTYAQVDRRSNQVARALHDHLGLRQGDCVALLMGNEPAYVWLWLGLVKLGCAMACLNYNIRAKSLLHCFQCCGAKVLLVSPELQAAVEEILPSLKKDDVSIYYVSRTSNTDGIDSFLDKVDEVSTEPIPESWRSEVTFSTPALYIYTSGTTGLPKAAMITHQRIWYGTGLTFVSGLKADDVIYITLPFYHSAALLIGIHGCIVAGATLALRTKFSASQFWDDCRKYNVTVIQYIGELLRYLCNSPQKPNDRDHKVRLALGNGLRGDVWRQFVKRFGDICIYEFYAATEGNIGFMNYARKVGAVGRVNYLQKKIITYDLIKYDVEKDEPVRDENGYCVRVPKGEVGLLVCKITQLTPFNGYAGAKAQTEKKKLRDVFKKGDLYFNSGDLLMVDHENFIYFHDRVGDTFRWKGENVATTEVADTVGLVDFVQEVNVYGVHVPDHEGRIGMASIKMKENHEFDGKKLFQHIADYLPSYARPRFLRIQDTIEITGTFKHRKMTLVEEGFNPAVIKDALYFLDDTAKMYVPMTEDIYNAISAKTLKL.

The Lumenal portion of the chain corresponds to 1 to 4 (MLSA). The chain crosses the membrane as a helical span at residues 5–27 (IYTVLAGLLFLPLLVNLCCPYFF). At 28–106 (QDIGYFLKVA…DHLGLRQGDC (79 aa)) the chain is on the cytoplasmic side. Residues 107-127 (VALLMGNEPAYVWLWLGLVKL) traverse the membrane as a helical segment. The Lumenal segment spans residues 128 to 261 (GCAMACLNYN…SGLKADDVIY (134 aa)). 222 to 233 (YIYTSGTTGLPK) is an AMP binding site. The chain crosses the membrane as a helical span at residues 262–282 (ITLPFYHSAALLIGIHGCIVA). Over 283–620 (GATLALRTKF…NAISAKTLKL (338 aa)) the chain is Cytoplasmic. Position 291 is an N6-acetyllysine (Lys-291). A Phosphothreonine modification is found at Thr-577.

It belongs to the ATP-dependent AMP-binding enzyme family. As to expression, expressed in liver, kidney, placenta, intestine, brain, heart, and colon. Predominantly expressed in liver. Expressed in liver, placenta, and intestine, but much lower relative to isoform 1.

Its subcellular location is the endoplasmic reticulum membrane. It is found in the peroxisome membrane. It localises to the cell membrane. The protein resides in the microsome. It catalyses the reaction a fatty acid(in) = a fatty acid(out). It carries out the reaction (9Z)-octadecenoate(out) = (9Z)-octadecenoate(in). The enzyme catalyses a long-chain fatty acid + ATP + CoA = a long-chain fatty acyl-CoA + AMP + diphosphate. The catalysed reaction is (5Z,8Z,11Z,14Z)-eicosatetraenoate + ATP + CoA = (5Z,8Z,11Z,14Z)-eicosatetraenoyl-CoA + AMP + diphosphate. It catalyses the reaction hexadecanoate + ATP + CoA = hexadecanoyl-CoA + AMP + diphosphate. It carries out the reaction (9Z)-octadecenoate + ATP + CoA = (9Z)-octadecenoyl-CoA + AMP + diphosphate. The enzyme catalyses 3,7,11,15-tetramethylhexadecanoate + ATP + CoA = phytanoyl-CoA + AMP + diphosphate. The catalysed reaction is (9Z,12Z,15Z)-octadecatrienoate + ATP + CoA = (9Z,12Z,15Z)-octadecatrienoyl-CoA + AMP + diphosphate. It catalyses the reaction 2,6,10,14-tetramethylpentadecanoate + ATP + CoA = pristanoyl-CoA + AMP + diphosphate. It carries out the reaction (E)-hexadec-2-enoate + ATP + CoA = (2E)-hexadecenoyl-CoA + AMP + diphosphate. The enzyme catalyses a very long-chain fatty acid + ATP + CoA = a very long-chain fatty acyl-CoA + AMP + diphosphate. The catalysed reaction is tetracosanoate + ATP + CoA = tetracosanoyl-CoA + AMP + diphosphate. It catalyses the reaction (4Z,7Z,10Z,13Z,16Z,19Z)-docosahexaenoate + ATP + CoA = (4Z,7Z,10Z,13Z,16Z,19Z)-docosahexaenoyl-CoA + AMP + diphosphate. It carries out the reaction (25R)-3alpha,7alpha,12alpha-trihydroxy-5beta-cholestan-26-oate + ATP + CoA = (25R)-3alpha,7alpha,12alpha-trihydroxy-5beta-cholestan-26-oyl-CoA + AMP + diphosphate. In terms of biological role, mediates the import of long-chain fatty acids (LCFA) into the cell by facilitating their transport across cell membranes, playing an important role in hepatic fatty acid uptake. Also functions as an acyl-CoA ligase catalyzing the ATP-dependent formation of fatty acyl-CoA using LCFA and very-long-chain fatty acids (VLCFA) as substrates, which prevents fatty acid efflux from cells and might drive more fatty acid uptake. Plays a pivotal role in regulating available LCFA substrates from exogenous sources in tissues undergoing high levels of beta-oxidation or triglyceride synthesis. Can also activate branched-chain fatty acids such as phytanic acid and pristanic acid. May contribute to the synthesis of sphingosine-1-phosphate. Does not activate C24 bile acids, cholate and chenodeoxycholate. In vitro, activates 3-alpha,7-alpha,12-alpha-trihydroxy-5-beta-cholestanate (THCA), the C27 precursor of cholic acid deriving from the de novo synthesis from cholesterol. However, it is not critical for THCA activation and bile synthesis in vivo. Its function is as follows. Exhibits both long-chain fatty acids (LCFA) transport activity and acyl CoA synthetase towards very long-chain fatty acids. Shows a preference for generating CoA derivatives of n-3 fatty acids, which are preferentially trafficked into phosphatidylinositol. Exhibits long-chain fatty acids (LCFA) transport activity but lacks acyl CoA synthetase towards very long-chain fatty acids. In Homo sapiens (Human), this protein is Long-chain fatty acid transport protein 2 (SLC27A2).